Consider the following 362-residue polypeptide: Melatonin receptor type 1B (362 aa).

Residues 1-42 (MSENGSFANCCEAGGWAVRPGWSGAGSARPSRTPRPPWVAPA) are Extracellular-facing. Residue N4 is glycosylated (N-linked (GlcNAc...) asparagine). Residues 43–63 (LSAVLIVTTAVDVVGNLLVIL) form a helical membrane-spanning segment. Topologically, residues 64-76 (SVLRNRKLRNAGN) are cytoplasmic. The helical transmembrane segment at 77–97 (LFLVSLALADLVVAFYPYPLI) threads the bilayer. The Extracellular segment spans residues 98-115 (LVAIFYDGWALGEEHCKA). C113 and C190 form a disulfide bridge. The helical transmembrane segment at 116-136 (SAFVMGLSVIGSVFNITAIAI) threads the bilayer. At 137-155 (NRYCYICHSMAYHRIYRRW) the chain is on the cytoplasmic side. The chain crosses the membrane as a helical span at residues 156 to 176 (HTPLHICLIWLLTVVALLPNF). The melatonin site is built by N175 and Q194. Residues 177 to 200 (FVGSLEYDPRIYSCTFIQTASTQY) are Extracellular-facing. Residues 201-221 (TAAVVVIHFLLPIAVVSFCYL) traverse the membrane as a helical segment. Residues 222 to 253 (RIWVLVLQARRKAKPESRLCLKPSDLRSFLTM) are Cytoplasmic-facing. Residues 254-274 (FVVFVIFAICWAPLNCIGLAV) form a helical membrane-spanning segment. At 275 to 287 (AINPQEMAPQIPE) the chain is on the extracellular side. Residues 288 to 308 (GLFVTSYLLAYFNSCLNAIVY) traverse the membrane as a helical segment. Residues 309 to 362 (GLLNQNFRREYKRILLALWNPRHCIQDASKGSHAEGLQSPAPPIIGVQHQADAL) lie on the Cytoplasmic side of the membrane.

This sequence belongs to the G-protein coupled receptor 1 family. In terms of assembly, interacts with GPR61, GPR62 and GPR135. Expressed in retina and less in brain and hippocampus.

The protein resides in the cell membrane. Its function is as follows. High affinity receptor for melatonin. Likely to mediate the reproductive and circadian actions of melatonin. The activity of this receptor is mediated by pertussis toxin sensitive G proteins that inhibit adenylate cyclase activity. This is Melatonin receptor type 1B (MTNR1B) from Homo sapiens (Human).